Consider the following 354-residue polypeptide: UDP-3-O-acylglucosamine N-acyltransferase (354 aa).

H258 serves as the catalytic Proton acceptor.

The protein belongs to the transferase hexapeptide repeat family. LpxD subfamily. As to quaternary structure, homotrimer.

It carries out the reaction a UDP-3-O-[(3R)-3-hydroxyacyl]-alpha-D-glucosamine + a (3R)-hydroxyacyl-[ACP] = a UDP-2-N,3-O-bis[(3R)-3-hydroxyacyl]-alpha-D-glucosamine + holo-[ACP] + H(+). The protein operates within bacterial outer membrane biogenesis; LPS lipid A biosynthesis. Catalyzes the N-acylation of UDP-3-O-acylglucosamine using 3-hydroxyacyl-ACP as the acyl donor. Is involved in the biosynthesis of lipid A, a phosphorylated glycolipid that anchors the lipopolysaccharide to the outer membrane of the cell. The chain is UDP-3-O-acylglucosamine N-acyltransferase from Sinorhizobium medicae (strain WSM419) (Ensifer medicae).